The chain runs to 474 residues: Hepatocyte nuclear factor 4-alpha (474 aa).

The nuclear receptor DNA-binding region spans 57–132; it reads SALCAICGDR…AGMKKEAVQN (76 aa). 2 consecutive NR C4-type zinc fingers follow at residues 60–80 and 96–120; these read CAIC…CDGC and CRFS…LKKC. 2 positions are modified to phosphoserine: S142 and S143. At Y144 the chain carries Phosphotyrosine. Positions 147–377 constitute an NR LBD domain; the sequence is SSLPSINALL…NLLQEMLLGG (231 aa). Residue T166 is modified to Phosphothreonine. S167 bears the Phosphoserine mark. Glycyl lysine isopeptide (Lys-Gly) (interchain with G-Cter in ubiquitin) cross-links involve residues K234 and K307. Phosphoserine; by AMPK is present on S313. The 9aaTAD motif lies at 368–376; that stretch reads NLLQEMLLG. The tract at residues 413 to 450 is disordered; the sequence is SNGQMCEWPRPRGQAATPETPQPSPPSGSGSESYKLLP. Phosphothreonine is present on residues T429 and T432. Position 436 is a phosphoserine (S436). K458 is subject to N6-acetyllysine.

Belongs to the nuclear hormone receptor family. NR2 subfamily. As to quaternary structure, homodimerization is required for HNF4-alpha to bind to its recognition site. Interacts with CLOCK, BMAL1 and PER1. Interacts with PER2. Interacts with CRY1 and CRY2. Interacts with NR0B2/SHP; the resulting heterodimer is transcriptionally inactive. Interacts with DDX3X; this interaction disrupts the interaction between HNF4 and NR0B2 that forms inactive heterodimers and enhances the formation of active HNF4 homodimers. In terms of processing, phosphorylated on tyrosine residue(s); phosphorylation is important for its DNA-binding activity. Phosphorylation may directly or indirectly play a regulatory role in the subnuclear distribution. Phosphorylation at Ser-313 by AMPK reduces the ability to form homodimers and bind DNA. Post-translationally, acetylation at Lys-458 lowers transcriptional activation by about two-fold. As to expression, expressed in the liver, pancreas and colon in a circadian manner.

It localises to the nucleus. Its function is as follows. Transcriptional regulator which controls the expression of hepatic genes during the transition of endodermal cells to hepatic progenitor cells, facilitatating the recruitment of RNA pol II to the promoters of target genes. Activates the transcription of CYP2C38. Represses the CLOCK-BMAL1 transcriptional activity and is essential for circadian rhythm maintenance and period regulation in the liver and colon cells. In Mus musculus (Mouse), this protein is Hepatocyte nuclear factor 4-alpha (Hnf4a).